A 190-amino-acid chain; its full sequence is MPKASDIKKNTAIEYNNNVYIIRDIERSVPQGRAGGSLYRMRMYDVVSGSKIDQTFKDNEMLPLADLVRRNVMFSYIDGEQYVFMDNEDYTPYNLDKDSIADEILLINEDTQGLQVVLVDGAPVALELPSSVELEIVETSPSIKGGSATARTKPAILSTGLTVQVPEHISTGDKIKVNTAEHKFMGRADK.

This sequence belongs to the elongation factor P family.

The polypeptide is Elongation factor P-like protein (Psychromonas ingrahamii (strain DSM 17664 / CCUG 51855 / 37)).